The following is a 255-amino-acid chain: MSMEDPFFVVKGEVQKAVNTAQGLFQRWTELLQGPSAATREEIDWTTNELRNNLRSIEWDLEDLDETISIVEANPRKFNLDATELSIRKAFITSTRQIVRDMKDQMSASSVQALAERKNRQALLGDSSSQNWDAGVTDRYGRLDRELQLANSHFIEEQQAQQQLIVEQQDEQLELVSGSIGVLKNMSQRIGGELEEQAVMLDDFSHELESTQSRLDNVMKKLAKVSHMTSDRRQWCAIAILFAVLLVVLTLFLVL.

The residue at position 2 (Ser2) is an N-acetylserine. A Phosphoserine modification is found at Ser2. An interaction with BLTP3B region spans residues 2–112 (SMEDPFFVVK…KDQMSASSVQ (111 aa)). Residues 2–168 (SMEDPFFVVK…QAQQQLIVEQ (167 aa)) form a required for interaction with VPS51 region. Topologically, residues 2-234 (SMEDPFFVVK…VSHMTSDRRQ (233 aa)) are cytoplasmic. Residues 41–74 (EEIDWTTNELRNNLRSIEWDLEDLDETISIVEAN) adopt a coiled-coil conformation. Residues Ser129 and Ser152 each carry the phosphoserine modification. Residues 163-225 (QLIVEQQDEQ…DNVMKKLAKV (63 aa)) form the t-SNARE coiled-coil homology domain. Residues 235 to 255 (WCAIAILFAVLLVVLTLFLVL) form a helical; Anchor for type IV membrane protein membrane-spanning segment.

The protein belongs to the syntaxin family. In terms of assembly, identified in a complex containing STX6, STX12, VAMP4 and VTI1A. Binds EEA1. Interacts with VPS45A and GOPC. Interacts with MARCHF2; the interaction promotes MARCHF2-mediated ubiquitination and degradation of CFTR. Interacts with MARCHF3. Interacts with BLTP3B (via C-terminal coiled-coil domain). Interacts with BAIAP3; this interaction is increased in the presence of calcium. Interacts (via N-terminus) with VPS51. Interacts with VPS13B. In terms of tissue distribution, widely expressed, with relatively higher expression in brain, lung and kidney.

It is found in the golgi apparatus membrane. Its subcellular location is the golgi apparatus. It localises to the trans-Golgi network membrane. The protein resides in the recycling endosome membrane. Its function is as follows. SNARE promoting movement of transport vesicles to target membranes. Targets endosomes to the trans-Golgi network, and may therefore function in retrograde trafficking. Together with SNARE STX12, promotes movement of vesicles from endosomes to the cell membrane, and may therefore function in the endocytic recycling pathway. This Rattus norvegicus (Rat) protein is Syntaxin-6 (Stx6).